A 472-amino-acid polypeptide reads, in one-letter code: MSAHGTNEGALWGGRFESGPAAAMAALSKSTHFDWVLAPYDVRASQAHARVLHKAGLLGDEDLASMLDGLGRLAADVASGEFVPSESDEDVHGALERGLIDRVGPEVGGRLRAGRSRNDQVATLFRMWLRDAVRRVAAGVLDVVDALATQAAAHPSAVMPGKTHLQAAQPVLLAHHLLAHTHPLLRDVQRLRDFDVRAAVSPYGSGALAGSSLGLDPEAIAAELDFDSSAENSIDATSSRDFAAEAAFVLAMIGVDLSRMAEEVILWSTPEFGYITLADAWSTGSSIMPQKKNPDVSELTRGKSGRLIGNLTGLLATLKAQPLAYNRDLQEDKEPVFDSVAQLELLLPAITGLVSTLEFHTDRMAELAPAGFTLATDIAEWLVRQGVPFRVAHEAAGACVRVAEARGVGLEDLTDDELAGVDPALTPDVREVLTVEGSIASRNARGGTAGIRVAEQLGGVRQLSESLREWCR.

The protein belongs to the lyase 1 family. Argininosuccinate lyase subfamily.

It localises to the cytoplasm. It catalyses the reaction 2-(N(omega)-L-arginino)succinate = fumarate + L-arginine. It functions in the pathway amino-acid biosynthesis; L-arginine biosynthesis; L-arginine from L-ornithine and carbamoyl phosphate: step 3/3. The protein is Argininosuccinate lyase of Rhodococcus jostii (strain RHA1).